The primary structure comprises 528 residues: UDP-glucuronosyltransferase 2B19 (528 aa).

The N-terminal stretch at 1 to 21 (MSMKWTSALLLIQLSCYLSFG) is a signal peptide. The residue at position 135 (K135) is an N6-succinyllysine. The N-linked (GlcNAc...) asparagine glycan is linked to N315. A helical transmembrane segment spans residues 493 to 513 (VIGFLLACVATVIFIITKCLF).

The protein belongs to the UDP-glycosyltransferase family. In terms of tissue distribution, expressed in liver, ovary, prostate, colon, kidney, pancreas, brain, cerebellum, mammary gland and epididymis. Not expressed in small intestine, spleen, bladder, adrenal gland and testis.

The protein localises to the microsome membrane. Its subcellular location is the endoplasmic reticulum membrane. It carries out the reaction glucuronate acceptor + UDP-alpha-D-glucuronate = acceptor beta-D-glucuronoside + UDP + H(+). Functionally, UDPGT is of major importance in the conjugation and subsequent elimination of potentially toxic xenobiotics and endogenous compounds. This isozyme displays activity toward several classes of xenobiotic substrates: eugenol, 4-methyllumbelliferone, p-nitrophenol, 1-naphthol, p,p'-biphenol, naringenin and o,o'-biphenol. Active also on 3a-hydroxy and 17b-hydroxy positions of steroids. In terms of biological role, contributes to the formation of androgen glucuronide in extrahepatic steroid target tissues such as the prostate. This Macaca fascicularis (Crab-eating macaque) protein is UDP-glucuronosyltransferase 2B19 (UGT2B19).